The chain runs to 272 residues: Probable proteasome subunit beta type-5 (272 aa).

The propeptide at 1 to 61 is removed in mature form; the sequence is MNSIVSKYTQ…KHCLIKMNHG (61 aa). Catalysis depends on Thr62, which acts as the Nucleophile.

This sequence belongs to the peptidase T1B family. The 26S proteasome consists of a 20S proteasome core and two 19S regulatory subunits. The 20S proteasome core is composed of 28 subunits that are arranged in four stacked rings, resulting in a barrel-shaped structure. The two end rings are each formed by seven alpha subunits, and the two central rings are each formed by seven beta subunits. The catalytic chamber with the active sites is on the inside of the barrel.

The protein localises to the cytoplasm. The protein resides in the nucleus. The catalysed reaction is Cleavage of peptide bonds with very broad specificity.. Its function is as follows. The proteasome is a multicatalytic proteinase complex which is characterized by its ability to cleave peptides with Arg, Phe, Tyr, Leu, and Glu adjacent to the leaving group at neutral or slightly basic pH. The proteasome has an ATP-dependent proteolytic activity. The chain is Probable proteasome subunit beta type-5 (pts1) from Schizosaccharomyces pombe (strain 972 / ATCC 24843) (Fission yeast).